The primary structure comprises 544 residues: Protein adenylyltransferase (544 aa).

Positions F63–D216 constitute a Fido domain. Residues F93–A94, R106–T107, E163–R167, and R170 each bind ATP.

The protein resides in the secreted. The catalysed reaction is L-tyrosyl-[protein] + ATP = O-(5'-adenylyl)-L-tyrosyl-[protein] + diphosphate. It carries out the reaction L-threonyl-[protein] + ATP = 3-O-(5'-adenylyl)-L-threonyl-[protein] + diphosphate. Adenylyltransferase involved in virulence by mediating the addition of adenosine 5'-monophosphate (AMP) to specific residue of host target proteins. The polypeptide is Protein adenylyltransferase (bepA) (Bartonella henselae (strain ATCC 49882 / DSM 28221 / CCUG 30454 / Houston 1) (Rochalimaea henselae)).